We begin with the raw amino-acid sequence, 212 residues long: Pyridoxine/pyridoxamine 5'-phosphate oxidase (212 aa).

Substrate contacts are provided by residues arginine 8 to tyrosine 11 and lysine 66. FMN-binding positions include arginine 61–lysine 66, phenylalanine 76–threonine 77, arginine 82, lysine 83, and glutamine 105. Residues tyrosine 123, arginine 127, and serine 131 each coordinate substrate. Residues glutamine 140–serine 141 and tryptophan 185 contribute to the FMN site. Residue arginine 191 to histidine 193 participates in substrate binding. Residue arginine 195 coordinates FMN.

It belongs to the pyridoxamine 5'-phosphate oxidase family. Homodimer. The cofactor is FMN.

It catalyses the reaction pyridoxamine 5'-phosphate + O2 + H2O = pyridoxal 5'-phosphate + H2O2 + NH4(+). It carries out the reaction pyridoxine 5'-phosphate + O2 = pyridoxal 5'-phosphate + H2O2. The protein operates within cofactor metabolism; pyridoxal 5'-phosphate salvage; pyridoxal 5'-phosphate from pyridoxamine 5'-phosphate: step 1/1. It functions in the pathway cofactor metabolism; pyridoxal 5'-phosphate salvage; pyridoxal 5'-phosphate from pyridoxine 5'-phosphate: step 1/1. Its function is as follows. Catalyzes the oxidation of either pyridoxine 5'-phosphate (PNP) or pyridoxamine 5'-phosphate (PMP) into pyridoxal 5'-phosphate (PLP). The protein is Pyridoxine/pyridoxamine 5'-phosphate oxidase of Shewanella pealeana (strain ATCC 700345 / ANG-SQ1).